We begin with the raw amino-acid sequence, 264 residues long: 5'-nucleotidase SurE (264 aa).

A divalent metal cation contacts are provided by Asp-8, Asp-9, Ser-41, and Asn-98.

It belongs to the SurE nucleotidase family. It depends on a divalent metal cation as a cofactor.

It is found in the cytoplasm. The catalysed reaction is a ribonucleoside 5'-phosphate + H2O = a ribonucleoside + phosphate. Its function is as follows. Nucleotidase that shows phosphatase activity on nucleoside 5'-monophosphates. The chain is 5'-nucleotidase SurE from Carboxydothermus hydrogenoformans (strain ATCC BAA-161 / DSM 6008 / Z-2901).